The primary structure comprises 245 residues: tRNA pseudouridine synthase A (245 aa).

The active-site Nucleophile is aspartate 52. Tyrosine 111 is a substrate binding site.

Belongs to the tRNA pseudouridine synthase TruA family. Homodimer.

It catalyses the reaction uridine(38/39/40) in tRNA = pseudouridine(38/39/40) in tRNA. In terms of biological role, formation of pseudouridine at positions 38, 39 and 40 in the anticodon stem and loop of transfer RNAs. The sequence is that of tRNA pseudouridine synthase A from Rickettsia peacockii (strain Rustic).